The primary structure comprises 400 residues: Probable phospho-2-dehydro-3-deoxyheptonate aldolase (400 aa).

This sequence belongs to the class-II DAHP synthase family.

It catalyses the reaction D-erythrose 4-phosphate + phosphoenolpyruvate + H2O = 7-phospho-2-dehydro-3-deoxy-D-arabino-heptonate + phosphate. It participates in antibiotic biosynthesis; phenazine biosynthesis. This is Probable phospho-2-dehydro-3-deoxyheptonate aldolase (phzC) from Pseudomonas fluorescens.